A 144-amino-acid chain; its full sequence is HTH-type transcriptional repressor NsrR (144 aa).

One can recognise an HTH rrf2-type domain in the interval 2 to 129 (QLTSFTDYGL…DKHTLLSLID (128 aa)). The segment at residues 28–51 (ISKVTEVYGVSRNHMVKIINKLGQ) is a DNA-binding region (H-T-H motif). Positions 91, 96, and 102 each coordinate [2Fe-2S] cluster.

The cofactor is [2Fe-2S] cluster.

Its function is as follows. Nitric oxide-sensitive repressor of genes involved in protecting the cell against nitrosative stress. May require iron for activity. The polypeptide is HTH-type transcriptional repressor NsrR (Photobacterium profundum (strain SS9)).